The chain runs to 393 residues: MKRNPNFTSLTQNYLFSDLRNRIAQFHSENPQHQVINLSIGDTTQPLDTSVAEAFSQAIARFSSPSTYCGYGPDFGLPSLRQKLSEKLYHGCVNAEEIFISDGAKVDLFRLLSFFGPNQIVAVQDPSYPAYIDIARLTGAKEIVSLPCLQENDFLPVFPENTHIDILCLCSPNNPTGTALNKNQLRAIVRYAIEHNILILFDAAYSAFISAPSLPKSIFEIPDARFCAIEINSFSKSLGFAGIRLGWTVIPKELTYEDGQPIIRDWKRFLSTTFNGASIPAQEAATAGLSTLSKLEAVHYYKENSHLLKTSLLKAGFQVFGGEHAPYLWVKPTIETVPYRDLFDFFLQEYHIAITPGIGFGLCGSGFVRFSSLGKREDVLVACERLQMTPALQ.

Positions 14 and 41 each coordinate substrate. Residues tyrosine 71, 104 to 105, tyrosine 128, asparagine 174, tyrosine 205, and 233 to 235 contribute to the pyridoxal 5'-phosphate site; these read AK and SFS. Residues lysine 105, tyrosine 128, and asparagine 174 each contribute to the substrate site. Residue lysine 236 is modified to N6-(pyridoxal phosphate)lysine. 2 residues coordinate pyridoxal 5'-phosphate: arginine 244 and asparagine 275. Substrate contacts are provided by asparagine 275 and arginine 369.

Belongs to the class-I pyridoxal-phosphate-dependent aminotransferase family. LL-diaminopimelate aminotransferase subfamily. Homodimer. Pyridoxal 5'-phosphate serves as cofactor.

The enzyme catalyses (2S,6S)-2,6-diaminopimelate + 2-oxoglutarate = (S)-2,3,4,5-tetrahydrodipicolinate + L-glutamate + H2O + H(+). Its pathway is amino-acid biosynthesis; L-lysine biosynthesis via DAP pathway; LL-2,6-diaminopimelate from (S)-tetrahydrodipicolinate (aminotransferase route): step 1/1. In terms of biological role, involved in the synthesis of meso-diaminopimelate (m-DAP or DL-DAP), required for both lysine and peptidoglycan biosynthesis. Catalyzes the direct conversion of tetrahydrodipicolinate to LL-diaminopimelate. The sequence is that of LL-diaminopimelate aminotransferase from Chlamydia muridarum (strain MoPn / Nigg).